Reading from the N-terminus, the 266-residue chain is Cysteine-rich repeat secretory protein 41 (266 aa).

Residues 1-26 form the signal peptide; the sequence is MSSVFGSVHILAMIAIQLLLTHSVSS. Gnk2-homologous domains follow at residues 33 to 136 and 142 to 253; these read YLHH…SVAS and YEND…LYPF.

The protein belongs to the cysteine-rich repeat secretory protein family.

The protein localises to the secreted. In Arabidopsis thaliana (Mouse-ear cress), this protein is Cysteine-rich repeat secretory protein 41 (CRRSP41).